Reading from the N-terminus, the 131-residue chain is Ribosome-binding factor A (131 aa).

Belongs to the RbfA family. In terms of assembly, monomer. Binds 30S ribosomal subunits, but not 50S ribosomal subunits or 70S ribosomes.

The protein localises to the cytoplasm. One of several proteins that assist in the late maturation steps of the functional core of the 30S ribosomal subunit. Associates with free 30S ribosomal subunits (but not with 30S subunits that are part of 70S ribosomes or polysomes). Required for efficient processing of 16S rRNA. May interact with the 5'-terminal helix region of 16S rRNA. This Thermotoga sp. (strain RQ2) protein is Ribosome-binding factor A.